The sequence spans 282 residues: Para-Rep C2 (282 aa).

One can recognise a CRESS-DNA virus Rep endonuclease domain in the interval M1–P99. The RCR-1 motif lies at C7–L10. 2 residues coordinate a divalent metal cation: E38 and H47. An RCR-2 motif is present at residues H47–Q49. Residues K56–K77 carry the Nuclear localization signal motif. Y86 functions as the For DNA cleavage activity in the catalytic mechanism. The RCR-3 signature appears at Y86 to K89. Residues P99 to N105 carry the Nuclear localization signal motif. G174–S182 lines the ATP pocket.

Belongs to the nanoviridea/circoviridae replication-associated protein family. As to quaternary structure, homooligomer (Potential). Rep binds to repeated DNA motifs (iterons). Mg(2+) serves as cofactor. Mn(2+) is required as a cofactor.

The protein resides in the host nucleus. It catalyses the reaction ATP + H2O = ADP + phosphate + H(+). Initiates and terminates the replication only of its own subviral DNA molecule. The closed circular ssDNA genome is first converted to a superhelical dsDNA. Rep binds a specific hairpin at the genome origin of replication. Introduces an endonucleolytic nick within the intergenic region of the genome, thereby initiating the rolling circle replication (RCR). Following cleavage, binds covalently to the 5'-phosphate of DNA as a tyrosyl ester. The cleavage gives rise to a free 3'-OH that serves as a primer for the cellular DNA polymerase. The polymerase synthesizes the (+) strand DNA by rolling circle mechanism. After one round of replication, a Rep-catalyzed nucleotidyl transfer reaction releases a circular single-stranded virus genome, thereby terminating the replication. Displays origin-specific DNA cleavage, nucleotidyl transferase, ATPase and helicase activities. The chain is Para-Rep C2 (C2) from Milk vetch dwarf C2 alphasatellite (MVDC2A).